Here is a 147-residue protein sequence, read N- to C-terminus: Testis-expressed protein 29 (147 aa).

Over 1–57 (MRYAPEFKKSPSHLLKKFAVCDIPLYDICDYNVSRDRCKELGCCFYKGICYEKAVPS) the chain is Extracellular. A helical transmembrane segment spans residues 58-78 (YVQVFSALIVIIAGAFVITII). The Cytoplasmic portion of the chain corresponds to 79–147 (YRVIQESRRE…IVTEEEETED (69 aa)). A disordered region spans residues 86–147 (RREKEVPTEA…IVTEEEETED (62 aa)). The segment covering 99-108 (AKSSVQVETQ) has biased composition (polar residues). Over residues 109-120 (PPSSAGAGSKAP) the composition is skewed to low complexity. The segment covering 125 to 135 (PQSKESGREDA) has biased composition (basic and acidic residues).

The protein resides in the membrane. This Bos taurus (Bovine) protein is Testis-expressed protein 29 (TEX29).